A 195-amino-acid chain; its full sequence is ATP-dependent Clp protease proteolytic subunit 1 (195 aa).

Catalysis depends on Ser-96, which acts as the Nucleophile. His-121 is an active-site residue.

It belongs to the peptidase S14 family. Fourteen ClpP subunits assemble into 2 heptameric rings which stack back to back to give a disk-like structure with a central cavity, resembling the structure of eukaryotic proteasomes.

The protein localises to the cytoplasm. It catalyses the reaction Hydrolysis of proteins to small peptides in the presence of ATP and magnesium. alpha-casein is the usual test substrate. In the absence of ATP, only oligopeptides shorter than five residues are hydrolyzed (such as succinyl-Leu-Tyr-|-NHMec, and Leu-Tyr-Leu-|-Tyr-Trp, in which cleavage of the -Tyr-|-Leu- and -Tyr-|-Trp bonds also occurs).. Cleaves peptides in various proteins in a process that requires ATP hydrolysis. Has a chymotrypsin-like activity. Plays a major role in the degradation of misfolded proteins. In Prochlorococcus marinus (strain MIT 9312), this protein is ATP-dependent Clp protease proteolytic subunit 1.